Consider the following 123-residue polypeptide: Small ribosomal subunit protein uS12 (123 aa).

3-methylthioaspartic acid is present on D89.

The protein belongs to the universal ribosomal protein uS12 family. As to quaternary structure, part of the 30S ribosomal subunit. Contacts proteins S8 and S17. May interact with IF1 in the 30S initiation complex.

Its function is as follows. With S4 and S5 plays an important role in translational accuracy. In terms of biological role, interacts with and stabilizes bases of the 16S rRNA that are involved in tRNA selection in the A site and with the mRNA backbone. Located at the interface of the 30S and 50S subunits, it traverses the body of the 30S subunit contacting proteins on the other side and probably holding the rRNA structure together. The combined cluster of proteins S8, S12 and S17 appears to hold together the shoulder and platform of the 30S subunit. The protein is Small ribosomal subunit protein uS12 of Afipia carboxidovorans (strain ATCC 49405 / DSM 1227 / KCTC 32145 / OM5) (Oligotropha carboxidovorans).